The primary structure comprises 254 residues: Trypsin 3A1 (254 aa).

A signal peptide spans methionine 1–alanine 20. Residues alanine 21–arginine 27 constitute a propeptide, activation peptide. The Peptidase S1 domain maps to isoleucine 28–glutamate 253. Cysteine 53 and cysteine 69 form a disulfide bridge. Residues histidine 68 and aspartate 113 each act as charge relay system in the active site. 2 cysteine pairs are disulfide-bonded: cysteine 178/cysteine 194 and cysteine 205/cysteine 229. Residue serine 209 is the Charge relay system of the active site.

It belongs to the peptidase S1 family. Midgut.

Its subcellular location is the secreted. The protein resides in the extracellular space. The enzyme catalyses Preferential cleavage: Arg-|-Xaa, Lys-|-Xaa.. Its function is as follows. Major function may be to aid in digestion of the blood meal. This Aedes aegypti (Yellowfever mosquito) protein is Trypsin 3A1.